Consider the following 244-residue polypeptide: 5-oxoprolinase subunit A (244 aa).

Belongs to the LamB/PxpA family. As to quaternary structure, forms a complex composed of PxpA, PxpB and PxpC.

The catalysed reaction is 5-oxo-L-proline + ATP + 2 H2O = L-glutamate + ADP + phosphate + H(+). Catalyzes the cleavage of 5-oxoproline to form L-glutamate coupled to the hydrolysis of ATP to ADP and inorganic phosphate. The chain is 5-oxoprolinase subunit A from Escherichia coli O6:K15:H31 (strain 536 / UPEC).